We begin with the raw amino-acid sequence, 243 residues long: Outer membrane protein A (243 aa).

A run of 5 beta stranded transmembrane segments spans residues Leu1–Pro8, Leu13–Gly21, Pro48–Ala57, Trp62–Gln69, and Met88–Arg96. Repeat copies occupy residues Ala104–Pro105, Ala106–Pro107, Ala108–Pro109, Ala110–Pro111, and Ala112–Pro113. Residues Ala104–Pro113 form a 5 X 2 AA tandem repeats of A-P region. Residues Val115–Ile243 form the OmpA-like domain. Cys215 and Cys229 are disulfide-bonded.

This sequence belongs to the outer membrane OOP (TC 1.B.6) superfamily. OmpA family. As to quaternary structure, monomer and homodimer.

The protein resides in the cell outer membrane. Functionally, with TolR probably plays a role in maintaining the position of the peptidoglycan cell wall in the periplasm. Acts as a porin with low permeability that allows slow penetration of small solutes; an internal gate slows down solute passage. This chain is Outer membrane protein A, found in Serratia odorifera.